The following is a 651-amino-acid chain: p-hydroxybenzoic acid efflux pump subunit AaeB (651 aa).

11 consecutive transmembrane segments (helical) span residues 11-31 (FACK…WFEM), 41-61 (AAIV…SGAI), 65-85 (GLLR…IIMT), 91-111 (VVML…SSLV), 117-137 (YVFA…QSSP), 150-170 (EIIL…PRSV), 367-387 (LFWL…LGVV), 404-424 (FLIG…LVLP), 428-448 (QSLL…GIEI), 454-474 (GSLG…PMTF), and 480-500 (LDNA…IMLI).

This sequence belongs to the aromatic acid exporter ArAE (TC 2.A.85) family.

It is found in the cell inner membrane. Its function is as follows. Forms an efflux pump with AaeA. Could function as a metabolic relief valve, allowing to eliminate certain compounds when they accumulate to high levels in the cell. In Musicola paradisiaca (strain Ech703) (Dickeya paradisiaca), this protein is p-hydroxybenzoic acid efflux pump subunit AaeB.